The sequence spans 98 residues: MNQTAILICCLVFLTLSGIQGIPLSRTVRCTCISISNQPVNPRSLEKLEIIPPSQFCPHVEIIATMKKKGEKRCLNPESKAIKNLLKAVSKERSKRSP.

An N-terminal signal peptide occupies residues 1 to 21 (MNQTAILICCLVFLTLSGIQG). Citrulline is present on Arg26. 2 disulfide bridges follow: Cys30–Cys57 and Cys32–Cys74.

It belongs to the intercrine alpha (chemokine CxC) family.

The protein resides in the secreted. Chemotactic for monocytes and T-lymphocytes. Binds to CXCR3. This Macaca mulatta (Rhesus macaque) protein is C-X-C motif chemokine 10 (CXCL10).